The following is a 173-amino-acid chain: Shikimate kinase (173 aa).

Position 14-19 (Gly-14–Thr-19) interacts with ATP. Position 18 (Ser-18) interacts with Mg(2+). Residues Asp-36, Arg-60, and Gly-82 each coordinate substrate. Arg-120 serves as a coordination point for ATP. Arg-140 is a binding site for substrate. Gln-157 is an ATP binding site.

Belongs to the shikimate kinase family. As to quaternary structure, monomer. Mg(2+) is required as a cofactor.

The protein localises to the cytoplasm. The catalysed reaction is shikimate + ATP = 3-phosphoshikimate + ADP + H(+). It participates in metabolic intermediate biosynthesis; chorismate biosynthesis; chorismate from D-erythrose 4-phosphate and phosphoenolpyruvate: step 5/7. Catalyzes the specific phosphorylation of the 3-hydroxyl group of shikimic acid using ATP as a cosubstrate. The sequence is that of Shikimate kinase from Buchnera aphidicola subsp. Schizaphis graminum (strain Sg).